The following is a 390-amino-acid chain: E3 ubiquitin-protein ligase At4g11680 (390 aa).

A compositionally biased stretch (low complexity) spans 1-19; sequence MSSSSSTTTNTTTESDSSS. Residues 1-39 are disordered; that stretch reads MSSSSSTTTNTTTESDSSSLPTHIGRSNSDGIIDTTPFL. Helical transmembrane passes span 109-129, 142-162, 212-232, 244-264, and 265-285; these read VVFL…AVLI, VWVV…CVEY, MFSF…GQTL, IIFL…ACVI, and GLAV…VADQ. The RING-type; atypical zinc-finger motif lies at 338–379; sequence CCICLCEYEDGVELRELPCNHHFHCTCIDKWLHINSRCPLCK.

It is found in the membrane. The enzyme catalyses S-ubiquitinyl-[E2 ubiquitin-conjugating enzyme]-L-cysteine + [acceptor protein]-L-lysine = [E2 ubiquitin-conjugating enzyme]-L-cysteine + N(6)-ubiquitinyl-[acceptor protein]-L-lysine.. It functions in the pathway protein modification; protein ubiquitination. In terms of biological role, mediates E2-dependent protein ubiquitination in vitro. The sequence is that of E3 ubiquitin-protein ligase At4g11680 from Arabidopsis thaliana (Mouse-ear cress).